Consider the following 118-residue polypeptide: Large ribosomal subunit protein bL20 (118 aa).

This sequence belongs to the bacterial ribosomal protein bL20 family.

Its function is as follows. Binds directly to 23S ribosomal RNA and is necessary for the in vitro assembly process of the 50S ribosomal subunit. It is not involved in the protein synthesizing functions of that subunit. The sequence is that of Large ribosomal subunit protein bL20 (rplT) from Buchnera aphidicola subsp. Acyrthosiphon pisum (strain APS) (Acyrthosiphon pisum symbiotic bacterium).